The primary structure comprises 593 residues: Probable tripeptidyl-peptidase SED3 (593 aa).

Residues 1–18 (MLLRWHSVIPLFLTMTVA) form the signal peptide. A propeptide spans 19–198 (LPNTYRTVVE…SLQVIYSSTN (180 aa)) (removed in mature form). 4 N-linked (GlcNAc...) asparagine glycosylation sites follow: asparagine 198, asparagine 204, asparagine 261, and asparagine 275. One can recognise a Peptidase S53 domain in the interval 206–592 (TITPRCLREL…RILAKIVQHM (387 aa)). Active-site charge relay system residues include glutamate 282 and aspartate 286. The N-linked (GlcNAc...) asparagine glycan is linked to asparagine 295. Serine 496 functions as the Charge relay system in the catalytic mechanism. The Ca(2+) site is built by aspartate 538 and isoleucine 539. Residues asparagine 554 and asparagine 566 are each glycosylated (N-linked (GlcNAc...) asparagine). Ca(2+) contacts are provided by glycine 570 and aspartate 572.

Requires Ca(2+) as cofactor.

The protein resides in the secreted. It is found in the extracellular space. The catalysed reaction is Release of an N-terminal tripeptide from a polypeptide.. Its function is as follows. Secreted tripeptidyl-peptidase which degrades proteins at acidic pHs and is involved in virulence. The chain is Probable tripeptidyl-peptidase SED3 (SED3) from Trichophyton verrucosum (strain HKI 0517).